A 340-amino-acid polypeptide reads, in one-letter code: Ketol-acid reductoisomerase (NADP(+)) (340 aa).

Residues 2–182 enclose the KARI N-terminal Rossmann domain; sequence ANIYYENHAD…GCTRAGVIET (181 aa). NADP(+) contacts are provided by residues 25 to 28, Ser51, Ser53, and 83 to 86; these read FGSQ and DTAQ. His108 is an active-site residue. Gly134 provides a ligand contact to NADP(+). One can recognise a KARI C-terminal knotted domain in the interval 183–328; the sequence is TFAEETETDL…RELRRMMPFV (146 aa). Mg(2+)-binding residues include Asp191, Glu195, Glu227, and Glu231. A substrate-binding site is contributed by Ser252.

The protein belongs to the ketol-acid reductoisomerase family. It depends on Mg(2+) as a cofactor.

The catalysed reaction is (2R)-2,3-dihydroxy-3-methylbutanoate + NADP(+) = (2S)-2-acetolactate + NADPH + H(+). The enzyme catalyses (2R,3R)-2,3-dihydroxy-3-methylpentanoate + NADP(+) = (S)-2-ethyl-2-hydroxy-3-oxobutanoate + NADPH + H(+). It participates in amino-acid biosynthesis; L-isoleucine biosynthesis; L-isoleucine from 2-oxobutanoate: step 2/4. It functions in the pathway amino-acid biosynthesis; L-valine biosynthesis; L-valine from pyruvate: step 2/4. Its function is as follows. Involved in the biosynthesis of branched-chain amino acids (BCAA). Catalyzes an alkyl-migration followed by a ketol-acid reduction of (S)-2-acetolactate (S2AL) to yield (R)-2,3-dihydroxy-isovalerate. In the isomerase reaction, S2AL is rearranged via a Mg-dependent methyl migration to produce 3-hydroxy-3-methyl-2-ketobutyrate (HMKB). In the reductase reaction, this 2-ketoacid undergoes a metal-dependent reduction by NADPH to yield (R)-2,3-dihydroxy-isovalerate. In Roseiflexus castenholzii (strain DSM 13941 / HLO8), this protein is Ketol-acid reductoisomerase (NADP(+)).